The primary structure comprises 359 residues: Probable 2-oxoacid dependent dioxygenase (359 aa).

The Fe2OG dioxygenase domain maps to 207–308 (KGLWMLCHCF…ISVACFFVHT (102 aa)). Residues H231, D233, and H287 each coordinate Fe cation. The disordered stretch occupies residues 329–359 (PPKYRDTTSESSNHYVARKPNGNSSLDHLRI). Polar residues predominate over residues 349–359 (NGNSSLDHLRI).

The protein belongs to the iron/ascorbate-dependent oxidoreductase family. Requires Fe(2+) as cofactor. As to expression, expressed in leaves and seeds. All cultivars with seed-only-functional allele have low to non-detectable GSL-OH expression in the leaves.

The enzyme catalyses gluconapin + AH2 + O2 = progoitrin + A + H2O. Functionally, necessary for the hydroxylation of but-3-enyl glucosinolate to 2-hydroxybut-3-enyl glucosinolate, which is toxic to insects, bacteria and nematodes, inhibits seed germination and produces bitter flavors. This Arabidopsis thaliana (Mouse-ear cress) protein is Probable 2-oxoacid dependent dioxygenase.